A 155-amino-acid chain; its full sequence is Myosin light chain alkali (155 aa).

2 consecutive EF-hand domains span residues 7–41 (REIENVEFVFEVMGSAGEGIDAVDLGDALRALNLN) and 80–115 (GCYEDFIECLKLYDKEENGTMMLAELQHALLALGES).

Myosin is a hexamer of 2 heavy chains and 4 light chains.

The chain is Myosin light chain alkali (Mlc1) from Drosophila pseudoobscura pseudoobscura (Fruit fly).